A 350-amino-acid polypeptide reads, in one-letter code: MAMRQTPLTCSGHTRPVVDLAFSGITPYGYFLISACKDGKPMLRQGDTGDWIGTFLGHKGAVWGATLNKDATKAATAAADFTAKVWDAVSGDELMTLAHKHIVKTVDFTQDSNYLLTGGQDKLLRIYDLNKPEAEPKEISGHTSGIKKALWCSEDKQILSADDKTVRLWDHATMTEVKSLNFNMSVSSMEYIPEGEILVITYGRSIAFHSAVSLDPIKSFEAPATINSASLHPEKEFLVAGGEDFKLYKYDYNSGEELESYKGHFGPIHCVRFSPDGELYASGSEDGTLRLWQTVVGKTYGLWKCVLPEEDSGELAKPKIGFPETTEEELEEIASENSDCIFPSAPDVKA.

7 WD repeats span residues 12–56 (GHTR…GTFL), 57–96 (GHKG…ELMT), 98–137 (AHKH…AEPK), 141–179 (GHTS…EVKS), 180–212 (LNFN…HSAV), 221–262 (EAPA…ESYK), and 263–302 (GHFG…TYGL). Ser312, Ser335, and Ser338 each carry phosphoserine.

This sequence belongs to the WD repeat STRAP family. As to quaternary structure, part of the core SMN complex that contains SMN1, GEMIN2/SIP1, DDX20/GEMIN3, GEMIN4, GEMIN5, GEMIN6, GEMIN7, GEMIN8 and STRAP/UNRIP. Part of the SMN-Sm complex that contains SMN1, GEMIN2/SIP1, DDX20/GEMIN3, GEMIN4, GEMIN5, GEMIN6, GEMIN7, GEMIN8, STRAP/UNRIP and the Sm proteins SNRPB, SNRPD1, SNRPD2, SNRPD3, SNRPE, SNRPF and SNRPG. Associates with the SMN complex in the cytoplasm but not in the nucleus. Interacts with GEMIN6; the interaction is direct. Interacts with GEMIN7; the interaction is direct. Interacts with CSDE1/UNR and MAWBP. Interacts with PDPK1. Interacts with TRIM48.

Its subcellular location is the cytoplasm. The protein localises to the nucleus. In terms of biological role, the SMN complex catalyzes the assembly of small nuclear ribonucleoproteins (snRNPs), the building blocks of the spliceosome, and thereby plays an important role in the splicing of cellular pre-mRNAs. Most spliceosomal snRNPs contain a common set of Sm proteins SNRPB, SNRPD1, SNRPD2, SNRPD3, SNRPE, SNRPF and SNRPG that assemble in a heptameric protein ring on the Sm site of the small nuclear RNA to form the core snRNP (Sm core). In the cytosol, the Sm proteins SNRPD1, SNRPD2, SNRPE, SNRPF and SNRPG are trapped in an inactive 6S pICln-Sm complex by the chaperone CLNS1A that controls the assembly of the core snRNP. To assemble core snRNPs, the SMN complex accepts the trapped 5Sm proteins from CLNS1A forming an intermediate. Binding of snRNA inside 5Sm triggers eviction of the SMN complex, thereby allowing binding of SNRPD3 and SNRPB to complete assembly of the core snRNP. STRAP plays a role in the cellular distribution of the SMN complex. Negatively regulates TGF-beta signaling but positively regulates the PDPK1 kinase activity by enhancing its autophosphorylation and by significantly reducing the association of PDPK1 with 14-3-3 protein. The sequence is that of Serine-threonine kinase receptor-associated protein (STRAP) from Homo sapiens (Human).